Reading from the N-terminus, the 288-residue chain is ATP phosphoribosyltransferase (288 aa).

Belongs to the ATP phosphoribosyltransferase family. Long subfamily. Requires Mg(2+) as cofactor.

It localises to the cytoplasm. The catalysed reaction is 1-(5-phospho-beta-D-ribosyl)-ATP + diphosphate = 5-phospho-alpha-D-ribose 1-diphosphate + ATP. The protein operates within amino-acid biosynthesis; L-histidine biosynthesis; L-histidine from 5-phospho-alpha-D-ribose 1-diphosphate: step 1/9. Feedback inhibited by histidine. In terms of biological role, catalyzes the condensation of ATP and 5-phosphoribose 1-diphosphate to form N'-(5'-phosphoribosyl)-ATP (PR-ATP). Has a crucial role in the pathway because the rate of histidine biosynthesis seems to be controlled primarily by regulation of HisG enzymatic activity. The sequence is that of ATP phosphoribosyltransferase from Methanococcus maripaludis (strain C5 / ATCC BAA-1333).